Reading from the N-terminus, the 307-residue chain is UDP-N-acetylenolpyruvoylglucosamine reductase (307 aa).

The FAD-binding PCMH-type domain maps to 33–197; the sequence is TGGNADFYIT…LEAAFTLAPG (165 aa). Arginine 176 is a catalytic residue. Catalysis depends on serine 226, which acts as the Proton donor. Glutamate 296 is a catalytic residue.

The protein belongs to the MurB family. FAD serves as cofactor.

It localises to the cytoplasm. The catalysed reaction is UDP-N-acetyl-alpha-D-muramate + NADP(+) = UDP-N-acetyl-3-O-(1-carboxyvinyl)-alpha-D-glucosamine + NADPH + H(+). It participates in cell wall biogenesis; peptidoglycan biosynthesis. Cell wall formation. The protein is UDP-N-acetylenolpyruvoylglucosamine reductase of Staphylococcus aureus (strain NCTC 8325 / PS 47).